The chain runs to 215 residues: uncharacterized protein (215 aa).

Residues 1 to 17 (MKKVLASATILSLMLVG) form the signal peptide. Positions 17–110 (GCSNGGNDES…NKQQQSVQDN (94 aa)) are disordered. C18 carries the N-palmitoyl cysteine lipid modification. C18 is lipidated: S-diacylglycerol cysteine. The span at 25-69 (ESSHKDDSSKTEQKDKSSSQHDSKKDSKRNDTNNKQDNQENKSNK) shows a compositional bias: basic and acidic residues. The span at 70–95 (EQTSNQNSNAGEQRTSERPTTNSNGI) shows a compositional bias: polar residues. Residues 96-110 (SSDNQNKQQQSVQDN) are compositionally biased toward low complexity.

The protein localises to the cell membrane. This is an uncharacterized protein from Staphylococcus epidermidis (strain ATCC 12228 / FDA PCI 1200).